The sequence spans 370 residues: Putative alanine racemase 2 (370 aa).

K38 serves as the catalytic Proton acceptor; specific for D-alanine. N6-(pyridoxal phosphate)lysine is present on K38. Y266 serves as the catalytic Proton acceptor; specific for L-alanine.

The protein belongs to the alanine racemase family. Pyridoxal 5'-phosphate serves as cofactor.

It catalyses the reaction L-alanine = D-alanine. The sequence is that of Putative alanine racemase 2 (alr2) from Schizosaccharomyces pombe (strain 972 / ATCC 24843) (Fission yeast).